Reading from the N-terminus, the 191-residue chain is Probable protein adenylyltransferase HI_0977 (191 aa).

The region spanning 37 to 162 is the Fido domain; sequence GSTKGLQQIH…NDLEIRFLLQ (126 aa). Residues 67–68, 112–114, R118, and Q145 contribute to the ATP site; these read KG and GNG.

This sequence belongs to the fic family.

It catalyses the reaction L-tyrosyl-[protein] + ATP = O-(5'-adenylyl)-L-tyrosyl-[protein] + diphosphate. The enzyme catalyses L-threonyl-[protein] + ATP = 3-O-(5'-adenylyl)-L-threonyl-[protein] + diphosphate. In terms of biological role, probable adenylyltransferase that mediates the addition of adenosine 5'-monophosphate (AMP) to specific residues of target proteins. The sequence is that of Probable protein adenylyltransferase HI_0977 from Haemophilus influenzae (strain ATCC 51907 / DSM 11121 / KW20 / Rd).